The following is an 89-amino-acid chain: Small ribosomal subunit protein uS15 (89 aa).

Belongs to the universal ribosomal protein uS15 family. As to quaternary structure, part of the 30S ribosomal subunit. Forms a bridge to the 50S subunit in the 70S ribosome, contacting the 23S rRNA.

Its function is as follows. One of the primary rRNA binding proteins, it binds directly to 16S rRNA where it helps nucleate assembly of the platform of the 30S subunit by binding and bridging several RNA helices of the 16S rRNA. Forms an intersubunit bridge (bridge B4) with the 23S rRNA of the 50S subunit in the ribosome. This chain is Small ribosomal subunit protein uS15, found in Shewanella baltica (strain OS185).